Reading from the N-terminus, the 136-residue chain is Histone H3.1 (136 aa).

The interval 1–41 (MARTKQTARKSTGGKAPRKQLATKAARKSAPAAGGVKKPHR) is disordered. K5 is modified (N6,N6,N6-trimethyllysine; alternate). K5 carries the post-translational modification N6,N6-dimethyllysine; alternate. K5 and K10 each carry N6-methyllysine; alternate. Position 10 is an N6-acetyllysine; alternate (K10). S11 is subject to Phosphoserine. K15 is subject to N6,N6-dimethyllysine; alternate. K15, K19, K24, K28, and K37 each carry N6-acetyllysine; alternate. N6-methyllysine; alternate occurs at positions 19, 24, 28, and 37. The segment covering 22 to 33 (ATKAARKSAPAA) has biased composition (low complexity). N6,N6,N6-trimethyllysine; alternate is present on residues K28 and K37. N6,N6-dimethyllysine; alternate is present on residues K28 and K37. N6-acetyllysine is present on residues K57 and K65. K80 bears the N6,N6,N6-trimethyllysine; alternate mark. An N6,N6-dimethyllysine; alternate modification is found at K80. N6-methyllysine; alternate is present on K80.

Belongs to the histone H3 family. In terms of assembly, the nucleosome is a histone octamer containing two molecules each of H2A, H2B, H3 and H4 assembled in one H3-H4 heterotetramer and two H2A-H2B heterodimers. The octamer wraps approximately 147 bp of DNA. Post-translationally, phosphorylated to form H3S10ph. H3S10ph promotes subsequent H3K14ac formation and is required for transcriptional activation through TBP recruitment to the promoters. Mono-, di- and trimethylated by the COMPASS complex to form H3K4me1/2/3. H3K4me activates gene expression by regulating transcription elongation and plays a role in telomere length maintenance. H3K4me enrichment correlates with transcription levels, and occurs in a 5' to 3' gradient with H3K4me3 enrichment at the 5'-end of genes, shifting to H3K4me2 and then H3K4me1. Methylated by SET2 to form H3K36me. H3K36me represses gene expression. Methylated by DOT1 to form H3K79me. H3K79me is required for association of SIR proteins with telomeric regions and for telomeric silencing. The COMPASS-mediated formation of H3K4me2/3 and the DOT1-mediated formation of H3K79me require H2BK123ub1. In terms of processing, acetylation of histone H3 leads to transcriptional activation. H3K14ac formation by GCN5 is promoted by H3S10ph. H3K14ac can also be formed by ESA1. H3K56ac formation occurs predominantly in newly synthesized H3 molecules during G1, S and G2/M of the cell cycle and may be involved in DNA repair.

The protein localises to the nucleus. It is found in the chromosome. Its function is as follows. Core component of nucleosome. Nucleosomes wrap and compact DNA into chromatin, limiting DNA accessibility to the cellular machineries which require DNA as a template. Histones thereby play a central role in transcription regulation, DNA repair, DNA replication and chromosomal stability. DNA accessibility is regulated via a complex set of post-translational modifications of histones, also called histone code, and nucleosome remodeling. The chain is Histone H3.1 (HHT1) from Mycosarcoma maydis (Corn smut fungus).